We begin with the raw amino-acid sequence, 479 residues long: Spindly-like protein spdl-1 (479 aa).

3 coiled-coil regions span residues 4–180 (DEEK…EGEL), 210–250 (EEDL…RFNV), and 321–357 (LMKD…KCAH).

As to quaternary structure, interacts with Zwilch homolog zwl-1, a component of the RZZ complex. Interacts with mdf-1 and mdf-2.

It localises to the chromosome. Its subcellular location is the centromere. The protein localises to the kinetochore. The protein resides in the cytoplasm. It is found in the cytoskeleton. It localises to the spindle pole. Functionally, transient kinetochore component required for chromosome and spindle pole alignment and chromosome segregation during mitosis. Functions downstream of the RZZ complex to mediate kinetochore-microtubule attachments and nuclear envelope breakdown during cell division. Required for kinetochore assembly and localizes the checkpoint proteins mdf-1 and mdf-2, dynein and dynactin to unattached kinetochores. Dynein is believed to control the initial lateral interaction between the kinetochore and spindle microtubules and to facilitate the subsequent formation of end-on kinetochore-microtubule attachments mediated by the NDC80 complex. Required for embryonic development. This is Spindly-like protein spdl-1 from Caenorhabditis elegans.